A 497-amino-acid chain; its full sequence is NADH-ubiquinone oxidoreductase chain 4 (497 aa).

A run of 14 helical transmembrane segments spans residues 3–23 (FLLY…LLII), 42–62 (LFFS…SDNI), 94–114 (ISLL…LISW), 122–142 (NSFI…FCVL), 144–164 (LVFF…LIGV), 178–198 (LFFY…VIYS), 220–240 (ILWA…PFHI), 250–270 (PTVG…YGLL), 276–296 (IFCD…LLGI), 313–333 (IAYA…TSNI), 340–360 (VFLM…IGCV), 374–394 (GLVS…LSNI), 418–438 (FAAL…IWLY), and 463–483 (VVGF…SYII).

This sequence belongs to the complex I subunit 4 family.

Its subcellular location is the mitochondrion membrane. It carries out the reaction a ubiquinone + NADH + 5 H(+)(in) = a ubiquinol + NAD(+) + 4 H(+)(out). Functionally, core subunit of the mitochondrial membrane respiratory chain NADH dehydrogenase (Complex I) that is believed to belong to the minimal assembly required for catalysis. Complex I functions in the transfer of electrons from NADH to the respiratory chain. The immediate electron acceptor for the enzyme is believed to be ubiquinone. This Acanthamoeba castellanii (Amoeba) protein is NADH-ubiquinone oxidoreductase chain 4 (ND4).